The primary structure comprises 223 residues: N-terminal Xaa-Pro-Lys N-methyltransferase 1 (223 aa).

Met-1 is subject to N-acetylmethionine. The residue at position 2 (Thr-2) is an N-acetylthreonine; in N-terminal Xaa-Pro-Lys N-methyltransferase 1, N-terminally processed. Residues Gly-69, Arg-74, 91-93 (DVT), 119-120 (LQ), and Gln-135 each bind S-adenosyl-L-methionine.

It belongs to the methyltransferase superfamily. NTM1 family.

It localises to the nucleus. It carries out the reaction N-terminal L-alanyl-L-prolyl-L-lysyl-[protein] + 3 S-adenosyl-L-methionine = N-terminal N,N,N-trimethyl-L-alanyl-L-prolyl-L-lysyl-[protein] + 3 S-adenosyl-L-homocysteine + 3 H(+). It catalyses the reaction N-terminal L-seryl-L-prolyl-L-lysyl-[protein] + 3 S-adenosyl-L-methionine = N-terminal N,N,N-trimethyl-L-seryl-L-prolyl-L-lysyl-[protein] + 3 S-adenosyl-L-homocysteine + 3 H(+). The catalysed reaction is N-terminal L-prolyl-L-prolyl-L-lysyl-[protein] + 2 S-adenosyl-L-methionine = N-terminal N,N-dimethyl-L-prolyl-L-prolyl-L-lysyl-[protein] + 2 S-adenosyl-L-homocysteine + 2 H(+). Functionally, distributive alpha-N-methyltransferase that methylates the N-terminus of target proteins containing the N-terminal motif [Ala/Gly/Pro/Ser]-Pro-Lys when the initiator Met is cleaved. Specifically catalyzes mono-, di- or tri-methylation of the exposed alpha-amino group of the Ala, Gly or Ser residue in the [Ala/Gly/Ser]-Pro-Lys motif and mono- or di-methylation of Pro in the Pro-Pro-Lys motif. Some of the substrates may be primed by NTMT2-mediated monomethylation. Catalyzes the trimethylation of the N-terminal Gly in CENPA (after removal of Met-1). Responsible for the N-terminal methylation of KLHL31, MYL2, MYL3, RB1, RCC1, RPL23A and SET. Required during mitosis for normal bipolar spindle formation and chromosome segregation via its action on RCC1. The sequence is that of N-terminal Xaa-Pro-Lys N-methyltransferase 1 (NTMT1) from Ailuropoda melanoleuca (Giant panda).